A 186-amino-acid polypeptide reads, in one-letter code: Golgi apparatus membrane protein-like protein ECHIDNA (186 aa).

Met-1 is subject to N-acetylmethionine. A run of 3 helical transmembrane segments spans residues 35–55 (ILSA…VLLA), 108–128 (FWWT…FSLI), and 132–152 (ADYL…IIGF).

It belongs to the TVP23 family. Component of a trans-Golgi network (TGN)-localized ECH/YIP4 complex made of ECH, YIP4A and YIP4B. Interacts directly with YIP4A and YIP4B.

The protein localises to the golgi apparatus. It is found in the trans-Golgi network membrane. The protein resides in the early endosome membrane. Its function is as follows. Mediates trans-Golgi-network trafficking and cell elongation. Required for keeping the appropriate balance between secretory trafficking and vacuolar targeting of a subset of proteins. The ECH/YIP4 complex is involved in the modulation of the trans-Golgi network (TGN)-mediated trafficking of some proteins and cell wall components (e.g. pectin and hemicellulose) to the cell wall in dark-grown hypocotyls and in secretory cells of the seed coat. In Arabidopsis thaliana (Mouse-ear cress), this protein is Golgi apparatus membrane protein-like protein ECHIDNA.